A 452-amino-acid polypeptide reads, in one-letter code: Trigger factor (452 aa).

The PPIase FKBP-type domain occupies 170–255 (GDRVTIDFTG…VKSVAAPGPL (86 aa)).

It belongs to the FKBP-type PPIase family. Tig subfamily.

The protein resides in the cytoplasm. The catalysed reaction is [protein]-peptidylproline (omega=180) = [protein]-peptidylproline (omega=0). In terms of biological role, involved in protein export. Acts as a chaperone by maintaining the newly synthesized protein in an open conformation. Functions as a peptidyl-prolyl cis-trans isomerase. In Xanthobacter autotrophicus (strain ATCC BAA-1158 / Py2), this protein is Trigger factor.